A 148-amino-acid chain; its full sequence is NADPH-dependent 7-cyano-7-deazaguanine reductase (148 aa).

Cys-50 functions as the Thioimide intermediate in the catalytic mechanism. Asp-57 (proton donor) is an active-site residue. Residues Val-72–Ser-74 and His-91–Glu-92 contribute to the substrate site.

Belongs to the GTP cyclohydrolase I family. QueF type 1 subfamily.

The protein resides in the cytoplasm. The catalysed reaction is 7-aminomethyl-7-carbaguanine + 2 NADP(+) = 7-cyano-7-deazaguanine + 2 NADPH + 3 H(+). The protein operates within tRNA modification; tRNA-queuosine biosynthesis. In terms of biological role, catalyzes the NADPH-dependent reduction of 7-cyano-7-deazaguanine (preQ0) to 7-aminomethyl-7-deazaguanine (preQ1). This chain is NADPH-dependent 7-cyano-7-deazaguanine reductase, found in Helicobacter pylori (strain HPAG1).